A 144-amino-acid polypeptide reads, in one-letter code: Transcriptional regulator SlyA (144 aa).

Positions Glu2–His135 constitute an HTH marR-type domain. Positions Gln49–Glu72 form a DNA-binding region, H-T-H motif.

Belongs to the SlyA family. Homodimer.

Functionally, transcription regulator that can specifically activate or repress expression of target genes. The polypeptide is Transcriptional regulator SlyA (Shigella boydii serotype 18 (strain CDC 3083-94 / BS512)).